The primary structure comprises 62 residues: Large ribosomal subunit protein bL28 (62 aa).

The protein belongs to the bacterial ribosomal protein bL28 family.

The chain is Large ribosomal subunit protein bL28 from Acidothermus cellulolyticus (strain ATCC 43068 / DSM 8971 / 11B).